A 194-amino-acid polypeptide reads, in one-letter code: MKIKTAEFVGSAFNESQYPKDKIPQIAIVGKSNVGKSTLINTVLGRKNLAKVSSTPGKTRGINFYLVNRAFYIVDLPGYGYAKVSKEMKKQWAYNIETFLNTSKNLKHALLLIDIRREPTEDDFMMVNWFSFKNLPFSVVLTKADKVNKSEANKAIENICRSFNISSDRVIVFSAVEKTGISEILRIFEEVIEK.

Positions 22–194 constitute an EngB-type G domain; that stretch reads KIPQIAIVGK…LRIFEEVIEK (173 aa). GTP contacts are provided by residues 30–37, 57–61, 75–78, 142–145, and 173–175; these read GKSNVGKS, GKTRG, DLPG, TKAD, and FSA. Residues Ser-37 and Thr-59 each contribute to the Mg(2+) site.

This sequence belongs to the TRAFAC class TrmE-Era-EngA-EngB-Septin-like GTPase superfamily. EngB GTPase family. It depends on Mg(2+) as a cofactor.

Functionally, necessary for normal cell division and for the maintenance of normal septation. This is Probable GTP-binding protein EngB from Caldanaerobacter subterraneus subsp. tengcongensis (strain DSM 15242 / JCM 11007 / NBRC 100824 / MB4) (Thermoanaerobacter tengcongensis).